Consider the following 102-residue polypeptide: MMLYSAQISTYYDFKKRVFQLYYYTGDTAMTSESAAVESAVVIISKASIINKFLAIDAGDHDAESMLASGDFNFAVSRSVRMSCDWCYWLRFLSDFPPFFAQ.

This is an uncharacterized protein from Sinorhizobium fredii (strain NBRC 101917 / NGR234).